Reading from the N-terminus, the 664-residue chain is Probable LRR receptor-like serine/threonine-protein kinase At1g63430 (664 aa).

The N-terminal stretch at 1-22 is a signal peptide; sequence MRSKYFCSLALVLGLFFVSCDG. Over 23-288 the chain is Extracellular; that stretch reads FASNEVQALR…KHHRASKPKW (266 aa). Residue Asn-75 is glycosylated (N-linked (GlcNAc...) asparagine). LRR repeat units follow at residues 94 to 116, 118 to 140, 142 to 165, and 166 to 178; these read YLQE…IGNL, NLKI…IGSL, GIMI…GNLK, and YLRE…NRLQ. Asn-197 carries N-linked (GlcNAc...) asparagine glycosylation. Residues 289 to 309 form a helical membrane-spanning segment; that stretch reads LLALEIVTGSMVGLLLLVALF. Topologically, residues 310–664 are cytoplasmic; the sequence is SAVHRWNNRS…LAWAELALDS (355 aa). Residues 360–642 form the Protein kinase domain; sequence EDFSNIIGLS…ELCETLESRI (283 aa).

Belongs to the protein kinase superfamily. Ser/Thr protein kinase family.

It localises to the cell membrane. It catalyses the reaction L-seryl-[protein] + ATP = O-phospho-L-seryl-[protein] + ADP + H(+). The catalysed reaction is L-threonyl-[protein] + ATP = O-phospho-L-threonyl-[protein] + ADP + H(+). In Arabidopsis thaliana (Mouse-ear cress), this protein is Probable LRR receptor-like serine/threonine-protein kinase At1g63430.